A 623-amino-acid chain; its full sequence is Glutathione import ATP-binding protein GsiA (623 aa).

ABC transporter domains lie at 15–269 (VENL…RALL) and 314–564 (LRVR…RKLL). ATP is bound by residues 49–56 (GESGSGKS) and 357–364 (GESGSGKS).

Belongs to the ABC transporter superfamily. Glutathione importer (TC 3.A.1.5.11) family. As to quaternary structure, the complex is composed of two ATP-binding proteins (GsiA), two transmembrane proteins (GsiC and GsiD) and a solute-binding protein (GsiB).

It localises to the cell inner membrane. The enzyme catalyses glutathione(out) + ATP + H2O = glutathione(in) + ADP + phosphate + H(+). Functionally, part of the ABC transporter complex GsiABCD involved in glutathione import. Responsible for energy coupling to the transport system. In Shigella sonnei (strain Ss046), this protein is Glutathione import ATP-binding protein GsiA.